The sequence spans 122 residues: Large ribosomal subunit protein bL12 (122 aa).

This sequence belongs to the bacterial ribosomal protein bL12 family. In terms of assembly, homodimer. Part of the ribosomal stalk of the 50S ribosomal subunit. Forms a multimeric L10(L12)X complex, where L10 forms an elongated spine to which 2 to 4 L12 dimers bind in a sequential fashion. Binds GTP-bound translation factors.

Functionally, forms part of the ribosomal stalk which helps the ribosome interact with GTP-bound translation factors. Is thus essential for accurate translation. The chain is Large ribosomal subunit protein bL12 from Xylella fastidiosa (strain 9a5c).